The chain runs to 95 residues: HssA/B-like protein 45 (95 aa).

The interval 1–31 is disordered; sequence MTLFSSISSISNPMTSSKSSIASFGSGTSMS.

The protein belongs to the hssA/B family.

The chain is HssA/B-like protein 45 (hssl45) from Dictyostelium discoideum (Social amoeba).